The following is a 530-amino-acid chain: Phosphoenolpyruvate carboxykinase (ATP) (530 aa).

Residues R58, Y195, and K201 each coordinate substrate. Residues K201, H220, and 236–244 (GLSGTGKTT) each bind ATP. K201 and H220 together coordinate Mn(2+). Residue D257 participates in Mn(2+) binding. ATP-binding positions include E285, R321, 440–441 (RI), and T446. R321 is a substrate binding site.

The protein belongs to the phosphoenolpyruvate carboxykinase (ATP) family. Mn(2+) is required as a cofactor.

It localises to the cytoplasm. It carries out the reaction oxaloacetate + ATP = phosphoenolpyruvate + ADP + CO2. The protein operates within carbohydrate biosynthesis; gluconeogenesis. Involved in the gluconeogenesis. Catalyzes the conversion of oxaloacetate (OAA) to phosphoenolpyruvate (PEP) through direct phosphoryl transfer between the nucleoside triphosphate and OAA. This is Phosphoenolpyruvate carboxykinase (ATP) from Staphylococcus haemolyticus (strain JCSC1435).